Reading from the N-terminus, the 407-residue chain is Peptidase T (407 aa).

His-82 is a Zn(2+) binding site. Asp-84 is an active-site residue. Asp-143 serves as a coordination point for Zn(2+). The active-site Proton acceptor is the Glu-177. The Zn(2+) site is built by Glu-178, Asp-200, and His-382.

The protein belongs to the peptidase M20B family. Zn(2+) is required as a cofactor.

Its subcellular location is the cytoplasm. The enzyme catalyses Release of the N-terminal residue from a tripeptide.. Functionally, cleaves the N-terminal amino acid of tripeptides. The sequence is that of Peptidase T from Streptococcus thermophilus (strain ATCC BAA-491 / LMD-9).